The primary structure comprises 118 residues: NADPH-dependent 7-cyano-7-deazaguanine reductase (118 aa).

The active-site Thioimide intermediate is Cys-31. The active-site Proton donor is the Asp-38. Residues 53–55 (VEL) and 72–73 (YE) each bind substrate.

It belongs to the GTP cyclohydrolase I family. QueF type 1 subfamily.

It is found in the cytoplasm. The enzyme catalyses 7-aminomethyl-7-carbaguanine + 2 NADP(+) = 7-cyano-7-deazaguanine + 2 NADPH + 3 H(+). The protein operates within tRNA modification; tRNA-queuosine biosynthesis. In terms of biological role, catalyzes the NADPH-dependent reduction of 7-cyano-7-deazaguanine (preQ0) to 7-aminomethyl-7-deazaguanine (preQ1). This is NADPH-dependent 7-cyano-7-deazaguanine reductase from Chlorobium phaeobacteroides (strain BS1).